The following is a 443-amino-acid chain: Ribulose bisphosphate carboxylase large chain (443 aa).

The substrate site is built by asparagine 89 and threonine 139. Residue lysine 141 is the Proton acceptor of the active site. Lysine 143 is a binding site for substrate. Residues lysine 167, aspartate 169, and glutamate 170 each coordinate Mg(2+). N6-carboxylysine is present on lysine 167. Residue histidine 260 is the Proton acceptor of the active site. 3 residues coordinate substrate: arginine 261, histidine 293, and serine 345.

This sequence belongs to the RuBisCO large chain family. Type I subfamily. In terms of assembly, heterohexadecamer of 8 large chains and 8 small chains; disulfide-linked. The disulfide link is formed within the large subunit homodimers. It depends on Mg(2+) as a cofactor. In terms of processing, the disulfide bond which can form in the large chain dimeric partners within the hexadecamer appears to be associated with oxidative stress and protein turnover.

The protein localises to the plastid. It is found in the chloroplast. It catalyses the reaction 2 (2R)-3-phosphoglycerate + 2 H(+) = D-ribulose 1,5-bisphosphate + CO2 + H2O. The enzyme catalyses D-ribulose 1,5-bisphosphate + O2 = 2-phosphoglycolate + (2R)-3-phosphoglycerate + 2 H(+). In terms of biological role, ruBisCO catalyzes two reactions: the carboxylation of D-ribulose 1,5-bisphosphate, the primary event in carbon dioxide fixation, as well as the oxidative fragmentation of the pentose substrate in the photorespiration process. Both reactions occur simultaneously and in competition at the same active site. This chain is Ribulose bisphosphate carboxylase large chain, found in Verbena bonariensis (Argentinian vervain).